The primary structure comprises 471 residues: Secretogranin-3 (471 aa).

Positions 1–22 (MGFLWTGSWILVLVLNSGPIQA) are cleaved as a signal peptide. Disordered stretches follow at residues 24-45 (PKPEGSQDKSLHNRELSAERPL), 89-108 (TVEKERQSIRSPPFDNQLNV), and 345-404 (KLEK…TDEA). Residues 28-45 (GSQDKSLHNRELSAERPL) show a composition bias toward basic and acidic residues. Ser40 carries the post-translational modification Phosphoserine. Ser40 is a glycosylation site (O-linked (Xyl...) (chondroitin sulfate) serine). 2 stretches are compositionally biased toward basic and acidic residues: residues 345–355 (KLEKNTTDSKS) and 364–404 (KSQE…TDEA). Ser365 bears the Phosphoserine mark.

Interacts with CHGA. Interacts with secretogranin II/SCG2. Interacts (via C-terminus) with CPE. Expressed in various brain areas, with highest levels in the arcuate nucleus and the lateral hypothalamic area, as well as the paraventricular nucleus and the ventromedial hypothalamus (at protein level).

Its subcellular location is the cytoplasmic vesicle. It is found in the secretory vesicle. The protein localises to the secretory vesicle membrane. It localises to the secreted. Member of the granin protein family that regulates the biogenesis of secretory granules. Acts as a sorting receptor for intragranular proteins including chromogranin A/CHGA. May also play a role in angiogenesis. Promotes endothelial proliferation, migration and tube formation through MEK/ERK signaling pathway. This is Secretogranin-3 (Scg3) from Mus musculus (Mouse).